The following is a 220-amino-acid chain: IQ domain-containing protein F3 (220 aa).

The segment covering 1-22 (MELDQDQKVETPEAAENGKDEM) has biased composition (basic and acidic residues). The segment at 1–81 (MELDQDQKVE…KQIQDEKTGI (81 aa)) is disordered. Positions 23 to 50 (QLEEQTQDEDTTETETETETETEAEAEG) are enriched in acidic residues. The stretch at 69–93 (QAEKQIQDEKTGIKEADRAIQEQTQ) forms a coiled coil. The 30-residue stretch at 146-175 (AELAGVKIQAWWRGTLVRRTLLLAILSAWT) folds into the IQ domain.

This is IQ domain-containing protein F3 (Iqcf3) from Rattus norvegicus (Rat).